Reading from the N-terminus, the 153-residue chain is Partner of bursicon (153 aa).

The signal sequence occupies residues 1–35 (MCNSVRTALAASNCCSIVLCCVLLLTLTLTVAVTA). Disulfide bonds link C44-C102, C68-C117, C77-C143, C81-C145, and C99-C148. The CTCK domain maps to 44-139 (CETLPSEIHL…SATMEIRLKE (96 aa)).

In terms of assembly, heterodimer of burs and pburs.

It is found in the secreted. In terms of biological role, final heterodimeric neurohormone released at the end of the molting cycle, involved in the sclerotization (tanning) of the insect cuticle, melanization and wing spreading. The protein is Partner of bursicon of Anopheles gambiae (African malaria mosquito).